Reading from the N-terminus, the 328-residue chain is MSKKPVRVAVTGAAGQIGYALLFRIASGEMLGKDQPVILQLLEVPVEGPQKALKGVMMELDDCAFPLLAGMEAHSDPMTAFKDADYALLVGSRPRGPGMERAELLAVNGAIFTAQGKALNAVASRNVKVLVVGNPANTNAYIAMKSAPDLPRKNFTAMLRLDHNRAASQIAAKTGKAVADIEKLTVWGNHSPTMYADYRFATINGESVAKMINDQEWNANVFLPTVGKRGAAIIEARGLSSAASAANAAIDHMRDWALGTNGKWVTMGIPSDGQYGIPKDTMFGFPVTCENGEYKLVEGLEIDAFSQERINKTLEELQGEQAGVAHLL.

12-18 (GAAGQIG) provides a ligand contact to NAD(+). Residues Arg95 and Arg101 each coordinate substrate. NAD(+) is bound by residues Asn108, Gln115, and 132 to 134 (VGN). Residues Asn134 and Arg165 each contribute to the substrate site. His190 functions as the Proton acceptor in the catalytic mechanism.

The protein belongs to the LDH/MDH superfamily. MDH type 2 family.

The enzyme catalyses (S)-malate + NAD(+) = oxaloacetate + NADH + H(+). Catalyzes the reversible oxidation of malate to oxaloacetate. In Polaromonas sp. (strain JS666 / ATCC BAA-500), this protein is Malate dehydrogenase.